A 376-amino-acid polypeptide reads, in one-letter code: tRNA-specific 2-thiouridylase MnmA (376 aa).

ATP is bound by residues 17–24 (GMSGGVDS) and Met-43. An interaction with target base in tRNA region spans residues 103–105 (NPD). Cys-108 (nucleophile) is an active-site residue. The cysteines at positions 108 and 205 are disulfide-linked. Residue Gly-132 participates in ATP binding. Residues 155–157 (KDQ) are interaction with tRNA. The active-site Cysteine persulfide intermediate is Cys-205. The segment at 315–316 (RY) is interaction with tRNA.

The protein belongs to the MnmA/TRMU family.

It localises to the cytoplasm. The catalysed reaction is S-sulfanyl-L-cysteinyl-[protein] + uridine(34) in tRNA + AH2 + ATP = 2-thiouridine(34) in tRNA + L-cysteinyl-[protein] + A + AMP + diphosphate + H(+). Its function is as follows. Catalyzes the 2-thiolation of uridine at the wobble position (U34) of tRNA, leading to the formation of s(2)U34. The chain is tRNA-specific 2-thiouridylase MnmA from Dichelobacter nodosus (strain VCS1703A).